The chain runs to 179 residues: ATP synthase subunit b (179 aa).

The chain crosses the membrane as a helical span at residues 13-33; the sequence is IHIDELVFGLIAFAVIFALVY.

Belongs to the ATPase B chain family. F-type ATPases have 2 components, F(1) - the catalytic core - and F(0) - the membrane proton channel. F(1) has five subunits: alpha(3), beta(3), gamma(1), delta(1), epsilon(1). F(0) has three main subunits: a(1), b(2) and c(10-14). The alpha and beta chains form an alternating ring which encloses part of the gamma chain. F(1) is attached to F(0) by a central stalk formed by the gamma and epsilon chains, while a peripheral stalk is formed by the delta and b chains.

The protein localises to the cell membrane. Its function is as follows. F(1)F(0) ATP synthase produces ATP from ADP in the presence of a proton or sodium gradient. F-type ATPases consist of two structural domains, F(1) containing the extramembraneous catalytic core and F(0) containing the membrane proton channel, linked together by a central stalk and a peripheral stalk. During catalysis, ATP synthesis in the catalytic domain of F(1) is coupled via a rotary mechanism of the central stalk subunits to proton translocation. In terms of biological role, component of the F(0) channel, it forms part of the peripheral stalk, linking F(1) to F(0). This is ATP synthase subunit b from Thermobifida fusca (strain YX).